The primary structure comprises 234 residues: MFVMRCDFVSIFPEYFDVLDISLIGKARRNGLLDLRVHNLREYSEAGRVDSSPYGGGPGMVMSAEPWARAIEHIATGESLVVFPSPSGQPYSHDLAQSLSSEMHIVFCCGRYEGIDNRIYEWTATRLRSSGISIGDYVLNGGEIAALAILEGFVRFIPGVLGNPESLVEESYQYNLLEYPVYTKPAVWRGLEVPDILLSGNHDLIREWRYKKQLEITQKTRPDLYSTHIYETDS.

Residues Gly110 and 134-139 (IGDYVL) contribute to the S-adenosyl-L-methionine site.

Belongs to the RNA methyltransferase TrmD family. In terms of assembly, homodimer.

It localises to the cytoplasm. The catalysed reaction is guanosine(37) in tRNA + S-adenosyl-L-methionine = N(1)-methylguanosine(37) in tRNA + S-adenosyl-L-homocysteine + H(+). Specifically methylates guanosine-37 in various tRNAs. The protein is tRNA (guanine-N(1)-)-methyltransferase of Tropheryma whipplei (strain Twist) (Whipple's bacillus).